The sequence spans 331 residues: Beta-ketoacyl-[acyl-carrier-protein] synthase III (331 aa).

Active-site residues include C113 and H253. The ACP-binding stretch occupies residues Q254 to R258. N283 is an active-site residue.

This sequence belongs to the thiolase-like superfamily. FabH family. Homodimer.

The protein localises to the cytoplasm. It catalyses the reaction malonyl-[ACP] + acetyl-CoA + H(+) = 3-oxobutanoyl-[ACP] + CO2 + CoA. The protein operates within lipid metabolism; fatty acid biosynthesis. Its function is as follows. Catalyzes the condensation reaction of fatty acid synthesis by the addition to an acyl acceptor of two carbons from malonyl-ACP. Catalyzes the first condensation reaction which initiates fatty acid synthesis and may therefore play a role in governing the total rate of fatty acid production. Possesses both acetoacetyl-ACP synthase and acetyl transacylase activities. Its substrate specificity determines the biosynthesis of branched-chain and/or straight-chain of fatty acids. This Desulfitobacterium hafniense (strain Y51) protein is Beta-ketoacyl-[acyl-carrier-protein] synthase III.